A 151-amino-acid polypeptide reads, in one-letter code: Deoxyuridine 5'-triphosphate nucleotidohydrolase (151 aa).

Substrate contacts are provided by residues 70–72 (RSG), N83, 87–89 (LID), and M97.

This sequence belongs to the dUTPase family. As to quaternary structure, homotrimer. Mg(2+) is required as a cofactor.

It catalyses the reaction dUTP + H2O = dUMP + diphosphate + H(+). The protein operates within pyrimidine metabolism; dUMP biosynthesis; dUMP from dCTP (dUTP route): step 2/2. In terms of biological role, this enzyme is involved in nucleotide metabolism: it produces dUMP, the immediate precursor of thymidine nucleotides and it decreases the intracellular concentration of dUTP so that uracil cannot be incorporated into DNA. The sequence is that of Deoxyuridine 5'-triphosphate nucleotidohydrolase from Escherichia fergusonii (strain ATCC 35469 / DSM 13698 / CCUG 18766 / IAM 14443 / JCM 21226 / LMG 7866 / NBRC 102419 / NCTC 12128 / CDC 0568-73).